The primary structure comprises 148 residues: Large ribosomal subunit protein bL9 (148 aa).

Belongs to the bacterial ribosomal protein bL9 family.

Binds to the 23S rRNA. In Chromohalobacter salexigens (strain ATCC BAA-138 / DSM 3043 / CIP 106854 / NCIMB 13768 / 1H11), this protein is Large ribosomal subunit protein bL9.